The chain runs to 233 residues: Outer membrane protein MIP (233 aa).

A signal peptide spans 1–20 (MKMKLVTAAVMGLAMSTAMA). One can recognise a PPIase FKBP-type domain in the interval 144 to 233 (SDTVTVEYTG…IHLISVKKSS (90 aa)).

The protein belongs to the FKBP-type PPIase family.

The protein localises to the cell outer membrane. The catalysed reaction is [protein]-peptidylproline (omega=180) = [protein]-peptidylproline (omega=0). With respect to regulation, strongly inhibited by FK506 but is completely resistant to cyclosporin A. Functionally, essential virulence factor associated with macrophage infectivity. Exhibits PPIase activity. The sequence is that of Outer membrane protein MIP (mip) from Legionella pneumophila subsp. pneumophila (strain Philadelphia 1 / ATCC 33152 / DSM 7513).